The sequence spans 120 residues: C-C motif chemokine 23 (120 aa).

The signal sequence occupies residues 1-21 (MKVSVAALSCLMLVTALGSQA). 3 cysteine pairs are disulfide-bonded: cysteine 54–cysteine 78, cysteine 55–cysteine 94, and cysteine 65–cysteine 105.

It belongs to the intercrine beta (chemokine CC) family. Post-translationally, the N-terminal is proteolytically cleaved by proteases associated with inflammatory responses. The processed forms, CCL23(19-99), CCL23(22-99), CCL23(27-99) and CCL23(30-99) exhibit increase in CCR1-mediated signaling and chemotaxis assays in vitro. High levels in adult lung, liver, skeletal muscle and pancreas. Moderate levels in fetal liver, adult bone marrow and placenta. The short form is the major species and the longer form was detected only in very low abundance. CCL23(19-99), CCL23(22-99), CCL23(27-99), CCL23(30-99) are found in high levels in synovial fluids from rheumatoid patients.

It is found in the secreted. In terms of biological role, shows chemotactic activity for monocytes, resting T-lymphocytes, and neutrophils, but not for activated lymphocytes. Inhibits proliferation of myeloid progenitor cells in colony formation assays. This protein can bind heparin. Binds CCR1. CCL23(19-99), CCL23(22-99), CCL23(27-99), CCL23(30-99) are more potent chemoattractants than CCL23. This chain is C-C motif chemokine 23 (CCL23), found in Homo sapiens (Human).